The sequence spans 103 residues: DNA-directed RNA polymerase subunit omega (103 aa).

This sequence belongs to the RNA polymerase subunit omega family. As to quaternary structure, the RNAP catalytic core consists of 2 alpha, 1 beta, 1 beta' and 1 omega subunit. When a sigma factor is associated with the core the holoenzyme is formed, which can initiate transcription.

The catalysed reaction is RNA(n) + a ribonucleoside 5'-triphosphate = RNA(n+1) + diphosphate. Its function is as follows. Promotes RNA polymerase assembly. Latches the N- and C-terminal regions of the beta' subunit thereby facilitating its interaction with the beta and alpha subunits. The chain is DNA-directed RNA polymerase subunit omega from Streptococcus agalactiae serotype III (strain NEM316).